The primary structure comprises 434 residues: Fc receptor-like protein 6 (434 aa).

An N-terminal signal peptide occupies residues 1–19 (MLLWTAVLLFVPCVGKTVW). Ig-like C2-type domains follow at residues 20–95 (LYLQ…QTFT), 111–197 (PPVL…PQLE), and 207–293 (PVLT…KKLS). Residues 20 to 307 (LYLQAWPNPV…QVLFTPASNW (288 aa)) are Extracellular-facing. Disulfide bonds link C39/C83, C132/C180, and C228/C276. The N-linked (GlcNAc...) asparagine glycan is linked to N65. N273 is a glycosylation site (N-linked (GlcNAc...) asparagine). Residues 308 to 328 (LVPWLPASLLGLMVIAAALLV) traverse the membrane as a helical segment. Residues 329–434 (YVRSWRKAGP…PLSDCEEVLC (106 aa)) are Cytoplasmic-facing. Residues 369-374 (VVYSVV) carry the ITIM motif motif. The residue at position 371 (Y371) is a Phosphotyrosine.

Interacts (tyrosine phosphorylated) with PTPN11. Interacts (tyrosine phosphorylated) with PTPN6, INPP5D, INPPL1 and GRB2. Interacts with class II MHC HLA-DR when the alpha chain is associated with a beta-1, beta-4 or a beta-5 but not a beta-3 chain. Phosphorylated on Tyr residues. Tyrosine phosphorylation induces association with phosphatase PTPN11, PTPN6, INPP5D, INPPL1 and GRB2. In terms of tissue distribution, expressed by cytolytic cells including NK cells, effector and effector-memory CD8(+) T-cells, and a subset of NKT cells (at protein level). Also expressed in gamma delta T cells and in a rare subset of effector CD4(+) T-cells (at protein level). Expressed in spleen, skin, peripheral blood leukocytes, liver, lung, bone marrow, small intestine and placenta. Expression among T-cells is greatly expanded in HIV-1 infected individuals, and includes not only effector and effector-memory CD8(+) T-cells but also populations of CD4(+) T-cells. Expression among CD8(+) T-cells and NK cells is expanded in individuals with chronic lymphocytic leukemia (CLL) but is reduced in PBMCs from patients with acute (AML), chronic myeloid leukemia (CML) and non-Hodgkin's lymphoma. Expression is higher in PBMCs and/or CD3(+) cells of patients with autoimmune diseases, such as rheumatoid arthritis (RA), systemic lupus erythematosus (SLE) and idiopathic thrombocytopenia purpura (ITP). In contrast, expression in CD3(+) cells from patients with lupus anticoagulans (LA) is higher.

It is found in the cell membrane. In terms of biological role, acts as a MHC class II receptor. When stimulated on its own, does not play a role in cytokine production or the release of cytotoxic granules by NK cells and cytotoxic CD8(+) T cells. Does not act as an Fc receptor. The chain is Fc receptor-like protein 6 (FCRL6) from Homo sapiens (Human).